The chain runs to 248 residues: Probable transcriptional regulatory protein blr1534 (248 aa).

The segment at 1 to 21 is disordered; the sequence is MAGHSQFKNIMHRKGRQDAQK.

This sequence belongs to the TACO1 family.

Its subcellular location is the cytoplasm. In Bradyrhizobium diazoefficiens (strain JCM 10833 / BCRC 13528 / IAM 13628 / NBRC 14792 / USDA 110), this protein is Probable transcriptional regulatory protein blr1534.